The sequence spans 317 residues: Petrobactin-binding protein YclQ (317 aa).

Positions 1–19 (MKKFALLFIALVTAVVISA) are cleaved as a signal peptide. Residue Cys-20 is the site of N-palmitoyl cysteine attachment. The S-diacylglycerol cysteine moiety is linked to residue Cys-20. The region spanning 56 to 317 (KVVVFDFGSL…IKEVKDGLEK (262 aa)) is the Fe/B12 periplasmic-binding domain.

The protein belongs to the bacterial solute-binding protein 8 family. In terms of assembly, the complex is composed of two ATP-binding proteins (YclP), two transmembrane proteins (YclN and YclO) and a solute-binding protein (YclQ). Interacts with FloT.

It is found in the cell membrane. The protein localises to the membrane raft. Functionally, part of the ABC transporter complex YclNOPQ involved in uptake of ferric-petrobactin. Petrobactin is a photoreactive 3,4-catecholate siderophore produced by many members of the B.cereus group, including B.anthracis. Binds selectively iron-free and ferric petrobactin and the petrobactin precursor 3,4-dihydroxybenzoic acid (3,4-DHB). In Bacillus subtilis (strain 168), this protein is Petrobactin-binding protein YclQ (yclQ).